We begin with the raw amino-acid sequence, 365 residues long: Methylthioribose-1-phosphate isomerase (365 aa).

Substrate is bound by residues 53-55 (RGA), Arg90, and Gln201. Asp242 functions as the Proton donor in the catalytic mechanism. 252-253 (NK) is a substrate binding site.

Belongs to the eIF-2B alpha/beta/delta subunits family. MtnA subfamily.

It catalyses the reaction 5-(methylsulfanyl)-alpha-D-ribose 1-phosphate = 5-(methylsulfanyl)-D-ribulose 1-phosphate. Its pathway is amino-acid biosynthesis; L-methionine biosynthesis via salvage pathway; L-methionine from S-methyl-5-thio-alpha-D-ribose 1-phosphate: step 1/6. Its function is as follows. Catalyzes the interconversion of methylthioribose-1-phosphate (MTR-1-P) into methylthioribulose-1-phosphate (MTRu-1-P). The polypeptide is Methylthioribose-1-phosphate isomerase (Methylorubrum extorquens (strain CM4 / NCIMB 13688) (Methylobacterium extorquens)).